A 146-amino-acid chain; its full sequence is MGKSTFLQDFKAFAMKGNVVDMAVGVIIGGAFGKIVSSVVADIIMPPLGLLIGGVNFTDLKWVMKAAEYGADGKETAAAVTLNYGNFLQATFDFLIIAFSIFLFIKLITKLTQKKAEAPAAPPAPPAPTKEEILLTEIRDLLKEKQ.

2 helical membrane passes run 12–32 and 88–108; these read AFAMKGNVVDMAVGVIIGGAF and LQATFDFLIIAFSIFLFIKLI.

It belongs to the MscL family. Homopentamer.

The protein resides in the cell inner membrane. Channel that opens in response to stretch forces in the membrane lipid bilayer. May participate in the regulation of osmotic pressure changes within the cell. This chain is Large-conductance mechanosensitive channel, found in Bacteroides fragilis (strain ATCC 25285 / DSM 2151 / CCUG 4856 / JCM 11019 / LMG 10263 / NCTC 9343 / Onslow / VPI 2553 / EN-2).